The following is a 513-amino-acid chain: ATP synthase subunit alpha (513 aa).

ATP is bound at residue 169-176 (GDRQTGKT).

The protein belongs to the ATPase alpha/beta chains family. In terms of assembly, F-type ATPases have 2 components, CF(1) - the catalytic core - and CF(0) - the membrane proton channel. CF(1) has five subunits: alpha(3), beta(3), gamma(1), delta(1), epsilon(1). CF(0) has three main subunits: a(1), b(2) and c(9-12). The alpha and beta chains form an alternating ring which encloses part of the gamma chain. CF(1) is attached to CF(0) by a central stalk formed by the gamma and epsilon chains, while a peripheral stalk is formed by the delta and b chains.

The protein resides in the cell inner membrane. It carries out the reaction ATP + H2O + 4 H(+)(in) = ADP + phosphate + 5 H(+)(out). In terms of biological role, produces ATP from ADP in the presence of a proton gradient across the membrane. The alpha chain is a regulatory subunit. The sequence is that of ATP synthase subunit alpha from Haemophilus ducreyi (strain 35000HP / ATCC 700724).